The primary structure comprises 324 residues: Ribose 1,5-bisphosphate isomerase (324 aa).

Residues 22–25 (RGAG) and arginine 65 contribute to the substrate site. Residue cysteine 135 is the Proton acceptor of the active site. 137–139 (SKA) is a substrate binding site. The active-site Proton donor is aspartate 204. Lysine 240 serves as a coordination point for substrate.

It belongs to the eIF-2B alpha/beta/delta subunits family. R15P isomerase subfamily.

It catalyses the reaction alpha-D-ribose 1,5-bisphosphate = D-ribulose 1,5-bisphosphate. Catalyzes the isomerization of ribose 1,5-bisphosphate (R15P) to ribulose 1,5-bisphosphate (RuBP), the CO(2) acceptor and substrate for RubisCO. Functions in an archaeal AMP degradation pathway, together with AMP phosphorylase and RubisCO. This chain is Ribose 1,5-bisphosphate isomerase, found in Pyrococcus furiosus (strain ATCC 43587 / DSM 3638 / JCM 8422 / Vc1).